A 179-amino-acid polypeptide reads, in one-letter code: Ribosome maturation factor RimM (179 aa).

The PRC barrel domain occupies 97–170 (DGELSWNFFV…LITVELPEGL (74 aa)).

The protein belongs to the RimM family. Binds ribosomal protein uS19.

The protein resides in the cytoplasm. Its function is as follows. An accessory protein needed during the final step in the assembly of 30S ribosomal subunit, possibly for assembly of the head region. Essential for efficient processing of 16S rRNA. May be needed both before and after RbfA during the maturation of 16S rRNA. It has affinity for free ribosomal 30S subunits but not for 70S ribosomes. The polypeptide is Ribosome maturation factor RimM (Bacteroides thetaiotaomicron (strain ATCC 29148 / DSM 2079 / JCM 5827 / CCUG 10774 / NCTC 10582 / VPI-5482 / E50)).